We begin with the raw amino-acid sequence, 308 residues long: GMP synthase [glutamine-hydrolyzing] subunit B (308 aa).

One can recognise a GMPS ATP-PPase domain in the interval 1–185 (MDWGRFVEEK…LGLPEKIYNR (185 aa)). An ATP-binding site is contributed by 28 to 34 (SGGVDSS).

Heterodimer composed of a glutamine amidotransferase subunit (A) and a GMP-binding subunit (B).

The catalysed reaction is XMP + L-glutamine + ATP + H2O = GMP + L-glutamate + AMP + diphosphate + 2 H(+). The protein operates within purine metabolism; GMP biosynthesis; GMP from XMP (L-Gln route): step 1/1. In terms of biological role, catalyzes the synthesis of GMP from XMP. The protein is GMP synthase [glutamine-hydrolyzing] subunit B (guaAB) of Pyrococcus horikoshii (strain ATCC 700860 / DSM 12428 / JCM 9974 / NBRC 100139 / OT-3).